Consider the following 89-residue polypeptide: Prostaglandin E2 receptor EP3 subtype (89 aa).

A helical membrane pass occupies residues G1–G18. At Q19–N48 the chain is on the extracellular side. N-linked (GlcNAc...) asparagine glycosylation occurs at N38. A helical membrane pass occupies residues V49–I74. Over K75–Q89 the chain is Cytoplasmic.

It belongs to the G-protein coupled receptor 1 family. In terms of assembly, interacts (via C-terminus) with MKLN1.

It is found in the cell membrane. Functionally, receptor for prostaglandin E2 (PGE2). Required for normal development of fever in response to pyrinogens, including IL1B, prostaglandin E2 and bacterial lipopolysaccharide (LPS). Required for normal potentiation of platelet aggregation by prostaglandin E2, and thus plays a role in the regulation of blood coagulation. Required for increased HCO3(-) secretion in the duodenum in response to mucosal acidification, and thereby contributes to the protection of the mucosa against acid-induced ulceration. Not required for normal kidney function, normal urine volume and osmolality. The chain is Prostaglandin E2 receptor EP3 subtype (PTGER3) from Ovis aries (Sheep).